The following is a 129-amino-acid chain: UPF0102 protein Mrad2831_2938 (129 aa).

The protein belongs to the UPF0102 family.

The protein is UPF0102 protein Mrad2831_2938 of Methylobacterium radiotolerans (strain ATCC 27329 / DSM 1819 / JCM 2831 / NBRC 15690 / NCIMB 10815 / 0-1).